A 160-amino-acid chain; its full sequence is Ureidoglycolate lyase (160 aa).

This sequence belongs to the ureidoglycolate lyase family. As to quaternary structure, homodimer. It depends on Ni(2+) as a cofactor.

It carries out the reaction (S)-ureidoglycolate = urea + glyoxylate. Its pathway is nitrogen metabolism; (S)-allantoin degradation. Catalyzes the catabolism of the allantoin degradation intermediate (S)-ureidoglycolate, generating urea and glyoxylate. Involved in the utilization of allantoin as nitrogen source. The polypeptide is Ureidoglycolate lyase (Salmonella gallinarum (strain 287/91 / NCTC 13346)).